A 119-amino-acid chain; its full sequence is Basic phospholipase A2 acanthin-1 (119 aa).

7 disulfide bridges follow: cysteine 11/cysteine 71, cysteine 27/cysteine 118, cysteine 29/cysteine 45, cysteine 44/cysteine 99, cysteine 51/cysteine 92, cysteine 60/cysteine 85, and cysteine 78/cysteine 90. Residues tyrosine 28, glycine 30, and glycine 32 each coordinate Ca(2+). The active site involves histidine 48. Aspartate 49 is a Ca(2+) binding site. Residue aspartate 93 is part of the active site.

Ca(2+) is required as a cofactor. In terms of tissue distribution, expressed by the venom gland.

It localises to the secreted. The enzyme catalyses a 1,2-diacyl-sn-glycero-3-phosphocholine + H2O = a 1-acyl-sn-glycero-3-phosphocholine + a fatty acid + H(+). Snake venom phospholipase A2 (PLA2) that potently inhibits ADP-(IC(50)=10 nM) and collagen-induced (IC(50)=7 nM) platelet aggregation when tested on human whole blood. PLA2 catalyzes the calcium-dependent hydrolysis of the 2-acyl groups in 3-sn-phosphoglycerides. The protein is Basic phospholipase A2 acanthin-1 of Acanthophis antarcticus (Common death adder).